Here is an 805-residue protein sequence, read N- to C-terminus: Leucine--tRNA ligase (805 aa).

The 'HIGH' region signature appears at 40–51 (PYPSGSGLHVGH). The 'KMSKS' region motif lies at 576–580 (KMSKS). Lys579 is an ATP binding site.

This sequence belongs to the class-I aminoacyl-tRNA synthetase family.

The protein resides in the cytoplasm. It catalyses the reaction tRNA(Leu) + L-leucine + ATP = L-leucyl-tRNA(Leu) + AMP + diphosphate. The polypeptide is Leucine--tRNA ligase (Chlorobium limicola (strain DSM 245 / NBRC 103803 / 6330)).